The primary structure comprises 191 residues: Lipid A acyltransferase PagP (191 aa).

An N-terminal signal peptide occupies residues 1-23 (MRLFYQRISLLISLCGFFSAAWA). Catalysis depends on residues His62, Asp105, and Ser106.

Belongs to the lipid A palmitoyltransferase family. Homodimer.

The protein localises to the cell outer membrane. It carries out the reaction a lipid A + a 1,2-diacyl-sn-glycero-3-phosphocholine = a hepta-acyl lipid A + a 2-acyl-sn-glycero-3-phosphocholine. The enzyme catalyses a lipid IVA + a 1,2-diacyl-sn-glycero-3-phosphocholine = a lipid IVB + a 2-acyl-sn-glycero-3-phosphocholine. The catalysed reaction is a lipid IIA + a 1,2-diacyl-sn-glycero-3-phosphocholine = a lipid IIB + a 2-acyl-sn-glycero-3-phosphocholine. Functionally, transfers a fatty acid residue from the sn-1 position of a phospholipid to the N-linked hydroxyfatty acid chain on the proximal unit of lipid A or its precursors. In Sodalis glossinidius (strain morsitans), this protein is Lipid A acyltransferase PagP.